The chain runs to 283 residues: MLQIALPNKGALADGAVTLADEAGYNCRRRGRELSVRDPDYGVEFVFLRPRDIATYVSKGIIDLGVTGLDLTYDSGADVTHVLDLGFGAARFCYAAPKSSDLTPDAFTADTRIATSYDTLVRRDLEQRGVDARVISLDGAVEISIQLGVADVIADVVQTGRTIDEAGLATIGAPILNTEAVLVAQNGHTMEKDAAQHFAERVKGIIVAREYVVVEYDLPEEHLPEARKITPGIESPTVSPLNKDGWVAVKAMIERESVNAVMDDLTELDARGIIVTDIRTCRM.

Belongs to the ATP phosphoribosyltransferase family. Long subfamily. Mg(2+) is required as a cofactor.

The protein resides in the cytoplasm. The catalysed reaction is 1-(5-phospho-beta-D-ribosyl)-ATP + diphosphate = 5-phospho-alpha-D-ribose 1-diphosphate + ATP. Its pathway is amino-acid biosynthesis; L-histidine biosynthesis; L-histidine from 5-phospho-alpha-D-ribose 1-diphosphate: step 1/9. With respect to regulation, feedback inhibited by histidine. In terms of biological role, catalyzes the condensation of ATP and 5-phosphoribose 1-diphosphate to form N'-(5'-phosphoribosyl)-ATP (PR-ATP). Has a crucial role in the pathway because the rate of histidine biosynthesis seems to be controlled primarily by regulation of HisG enzymatic activity. The sequence is that of ATP phosphoribosyltransferase from Salinibacter ruber (strain DSM 13855 / M31).